Here is a 103-residue protein sequence, read N- to C-terminus: Protamine-2 (103 aa).

The interval 1 to 103 (MVRYRMRSLS…RTRRRRCRRH (103 aa)) is disordered. 2 positions are modified to phosphoserine: Ser-8 and Ser-10. The segment covering 8–17 (SLSERPHEVH) has biased composition (basic and acidic residues). Low complexity predominate over residues 18-29 (GQQVHGQDQGHN). Residues 48-103 (HRGHSHHRRRRCSRRRLHRIHRRRHRSCRRRRRRSCRHRRRHRRGCRTRRRRCRRH) are compositionally biased toward basic residues.

Belongs to the protamine P2 family. In terms of assembly, interacts with TDRP. Post-translationally, proteolytic processing into mature chains is required for histone eviction during spermatogenesis. Transition proteins (TNP1 and TNP2) are required for processing. In terms of tissue distribution, testis.

It is found in the nucleus. The protein resides in the chromosome. Functionally, protamines substitute for histones in the chromatin of sperm during the haploid phase of spermatogenesis. They compact sperm DNA into a highly condensed, stable and inactive complex. In Macaca nemestrina (Pig-tailed macaque), this protein is Protamine-2 (PRM2).